Reading from the N-terminus, the 137-residue chain is Peptide methionine sulfoxide reductase MsrB (137 aa).

A MsrB domain is found at 7-129 (AEELKKNLSE…NSASLRFTDG (123 aa)). Cysteine 46, cysteine 49, cysteine 95, and cysteine 98 together coordinate Zn(2+). Cysteine 118 acts as the Nucleophile in catalysis.

Belongs to the MsrB Met sulfoxide reductase family. Requires Zn(2+) as cofactor.

It catalyses the reaction L-methionyl-[protein] + [thioredoxin]-disulfide + H2O = L-methionyl-(R)-S-oxide-[protein] + [thioredoxin]-dithiol. In Escherichia coli O8 (strain IAI1), this protein is Peptide methionine sulfoxide reductase MsrB.